The primary structure comprises 650 residues: Chaperone protein DnaK (650 aa).

Position 200 is a phosphothreonine; by autocatalysis (Thr200). Positions 611 to 636 are enriched in low complexity; it reads AQQAGAAGAAGAAEGAAHAGGAQQAA. The interval 611–637 is disordered; it reads AQQAGAAGAAGAAEGAAHAGGAQQAAD.

Belongs to the heat shock protein 70 family.

Its function is as follows. Acts as a chaperone. The chain is Chaperone protein DnaK from Burkholderia ambifaria (strain MC40-6).